Consider the following 160-residue polypeptide: Cyclic pyranopterin monophosphate synthase (160 aa).

Substrate-binding positions include 77–79 (MCH) and 114–115 (ME). Aspartate 129 is a catalytic residue.

It belongs to the MoaC family. Homohexamer; trimer of dimers.

The enzyme catalyses (8S)-3',8-cyclo-7,8-dihydroguanosine 5'-triphosphate = cyclic pyranopterin phosphate + diphosphate. It participates in cofactor biosynthesis; molybdopterin biosynthesis. In terms of biological role, catalyzes the conversion of (8S)-3',8-cyclo-7,8-dihydroguanosine 5'-triphosphate to cyclic pyranopterin monophosphate (cPMP). The polypeptide is Cyclic pyranopterin monophosphate synthase (Listeria monocytogenes serotype 4b (strain F2365)).